A 209-amino-acid chain; its full sequence is Methylthioribulose-1-phosphate dehydratase (209 aa).

Positions 99 and 101 each coordinate Zn(2+).

This sequence belongs to the aldolase class II family. MtnB subfamily. Zn(2+) is required as a cofactor.

The enzyme catalyses 5-(methylsulfanyl)-D-ribulose 1-phosphate = 5-methylsulfanyl-2,3-dioxopentyl phosphate + H2O. It participates in amino-acid biosynthesis; L-methionine biosynthesis via salvage pathway; L-methionine from S-methyl-5-thio-alpha-D-ribose 1-phosphate: step 2/6. Functionally, catalyzes the dehydration of methylthioribulose-1-phosphate (MTRu-1-P) into 2,3-diketo-5-methylthiopentyl-1-phosphate (DK-MTP-1-P). The polypeptide is Methylthioribulose-1-phosphate dehydratase (Leptospira biflexa serovar Patoc (strain Patoc 1 / Ames)).